The following is a 272-amino-acid chain: Orotidine 5'-phosphate decarboxylase (272 aa).

The Proton donor role is filled by K96.

This sequence belongs to the OMP decarboxylase family. Type 2 subfamily.

The catalysed reaction is orotidine 5'-phosphate + H(+) = UMP + CO2. The protein operates within pyrimidine metabolism; UMP biosynthesis via de novo pathway; UMP from orotate: step 2/2. This chain is Orotidine 5'-phosphate decarboxylase, found in Christiangramia forsetii (strain DSM 17595 / CGMCC 1.15422 / KT0803) (Gramella forsetii).